The primary structure comprises 80 residues: RNA-binding protein Hfq (80 aa).

The Sm domain maps to E9–V68.

It belongs to the Hfq family. As to quaternary structure, homohexamer.

Its function is as follows. RNA chaperone that binds small regulatory RNA (sRNAs) and mRNAs to facilitate mRNA translational regulation in response to envelope stress, environmental stress and changes in metabolite concentrations. Also binds with high specificity to tRNAs. The polypeptide is RNA-binding protein Hfq (Thioalkalivibrio sulfidiphilus (strain HL-EbGR7)).